An 85-amino-acid chain; its full sequence is Large ribosomal subunit protein bL27 (85 aa).

The segment covering 1-11 (MASKASGGSTR) has biased composition (polar residues). The disordered stretch occupies residues 1–20 (MASKASGGSTRNGRDSISKR).

This sequence belongs to the bacterial ribosomal protein bL27 family.

In Sulfurihydrogenibium sp. (strain YO3AOP1), this protein is Large ribosomal subunit protein bL27.